We begin with the raw amino-acid sequence, 169 residues long: 4-hydroxylaminobenzoate lyase (169 aa).

The protein belongs to the PnbB family.

It catalyses the reaction 4-hydroxylaminobenzoate + H2O + H(+) = 3,4-dihydroxybenzoate + NH4(+). Its function is as follows. Lyase involved in the degradation of nitroaromatic compounds. Catalyzes the conversion of 4-hydroxylaminobenzoate to 3,4-dihydroxybenzoate (protocatechuate). This Nocardioides sp. (strain LMS-CY) protein is 4-hydroxylaminobenzoate lyase.